The chain runs to 222 residues: Germin-like protein subfamily 1 member 20 (222 aa).

The first 22 residues, 1–22 (MRVSQSLVPFAIIALVLSFVNA), serve as a signal peptide directing secretion. Cys-32 and Cys-48 are disulfide-bonded. The Cupin type-1 domain maps to 62 to 213 (SGLNVPGNTN…AFQLDASVVK (152 aa)). An N-linked (GlcNAc...) asparagine glycan is attached at Asn-77. Mn(2+) is bound by residues His-110, His-112, Glu-117, and His-159.

This sequence belongs to the germin family. Oligomer (believed to be a pentamer but probably hexamer). In terms of tissue distribution, expressed in stems and developing embryos.

Its subcellular location is the secreted. The protein localises to the extracellular space. It localises to the apoplast. Functionally, may play a role in plant defense. Probably has no oxalate oxidase activity even if the active site is conserved. The sequence is that of Germin-like protein subfamily 1 member 20 (GLP5A) from Arabidopsis thaliana (Mouse-ear cress).